The sequence spans 445 residues: Transmembrane protein 184C (445 aa).

7 helical membrane passes run 15–35 (LVVL…VWEL), 46–66 (AWFI…WGIL), 84–104 (ILWM…YPNI), 177–197 (YTVV…VGVY), 210–230 (YLVI…VLFY), 252–272 (VVFV…VGVI), and 285–305 (AVAT…AAIA). 2 disordered regions span residues 369–393 (EHTS…SSPM) and 421–445 (TSAT…LDRS). Residues 370-390 (HTSLLSSSTQDPISDASSMPS) are compositionally biased toward polar residues.

Belongs to the TMEM184 family.

Its subcellular location is the membrane. Its function is as follows. May play a role in cell growth. This Gallus gallus (Chicken) protein is Transmembrane protein 184C (TMEM184C).